The chain runs to 456 residues: MNFDIEKLEKIKVRDGQEFFFIQTFGCQMNEEDSEKLSGMLKSQGYEETENRDEASIVIFNTCCVRENAENKVFGNLGRLKNQKEKNPNLIIALCGCMMQQKGMADEILSRFPYVDIIFGTHNAYKFPEYLHRVQVEGVQVKEIFDKETEIVEGVPIDRKSNVKAFVTIMYGCNNFCTYCVVPYVRGRERSRRPEDIENEIKELVSNGYKEITLLGQNVNSYGKGLEEEITFAQLLRRINEIDGLERLRFMTSHPKDLTLDVVYAIRDCDKLCEQIHLPVQSGSNEILQKMNRHYNKEQYLELAKKIREEIPDVTFSTDIIVGFPGETEEDFEETINLVKEVRYDAAFTFIYSRRNHTPADKMEDQIPDDVKHDRFNRLVAAVNEGIVVGNKAAEGKIYEVLVEGTSKNNENKLTGRTRNAKLVNFDGCKEMIGKLVKVKIIEAKSFSLVGEVVEQ.

Residues 18–136 (EFFFIQTFGC…FPEYLHRVQV (119 aa)) enclose the MTTase N-terminal domain. The [4Fe-4S] cluster site is built by Cys27, Cys63, Cys97, Cys173, Cys177, and Cys180. A Radical SAM core domain is found at 159 to 391 (RKSNVKAFVT…AVNEGIVVGN (233 aa)). One can recognise a TRAM domain in the interval 392 to 455 (KAAEGKIYEV…SFSLVGEVVE (64 aa)).

Belongs to the methylthiotransferase family. MiaB subfamily. As to quaternary structure, monomer. [4Fe-4S] cluster serves as cofactor.

It is found in the cytoplasm. The enzyme catalyses N(6)-dimethylallyladenosine(37) in tRNA + (sulfur carrier)-SH + AH2 + 2 S-adenosyl-L-methionine = 2-methylsulfanyl-N(6)-dimethylallyladenosine(37) in tRNA + (sulfur carrier)-H + 5'-deoxyadenosine + L-methionine + A + S-adenosyl-L-homocysteine + 2 H(+). Its function is as follows. Catalyzes the methylthiolation of N6-(dimethylallyl)adenosine (i(6)A), leading to the formation of 2-methylthio-N6-(dimethylallyl)adenosine (ms(2)i(6)A) at position 37 in tRNAs that read codons beginning with uridine. This Clostridium botulinum (strain Alaska E43 / Type E3) protein is tRNA-2-methylthio-N(6)-dimethylallyladenosine synthase.